The following is a 135-amino-acid chain: NADH-quinone oxidoreductase subunit K (135 aa).

A run of 3 helical transmembrane segments spans residues 33 to 53 (VLGL…FAIG), 63 to 83 (FLFM…AFVV), and 95 to 115 (IMFI…LAIL).

The protein belongs to the complex I subunit 4L family. As to quaternary structure, NDH-1 is composed of 14 different subunits. Subunits NuoA, H, J, K, L, M, N constitute the membrane sector of the complex.

Its subcellular location is the cell inner membrane. The enzyme catalyses a quinone + NADH + 5 H(+)(in) = a quinol + NAD(+) + 4 H(+)(out). In terms of biological role, NDH-1 shuttles electrons from NADH, via FMN and iron-sulfur (Fe-S) centers, to quinones in the respiratory chain. The immediate electron acceptor for the enzyme in this species is believed to be ubiquinone. Couples the redox reaction to proton translocation (for every two electrons transferred, four hydrogen ions are translocated across the cytoplasmic membrane), and thus conserves the redox energy in a proton gradient. This is NADH-quinone oxidoreductase subunit K from Psychrobacter cryohalolentis (strain ATCC BAA-1226 / DSM 17306 / VKM B-2378 / K5).